Reading from the N-terminus, the 485-residue chain is Choline/ethanolamine transporter flvcr2b (485 aa).

At 1–46 (MDTRFNDINRVKMGDESKSVDGEVNDNTYYSKTDAEVNFEHRYTTP) the chain is on the cytoplasmic side. Residues 47-71 (ETRLYKKRWVIVCLFSSYSLCNSYQ) traverse the membrane as a helical segment. Residues Asn-68 and Trp-72 each contribute to the choline site. The Extracellular segment spans residues 72–89 (WIQYGIINNIFMRFYGVD). A helical membrane pass occupies residues 90–117 (SFTIDWMSMIYMLTYIPLIFPVSWLLDK). Residues 118–119 (KG) are Cytoplasmic-facing. A helical transmembrane segment spans residues 120 to 139 (LRVIALVAAALNCAGTWIKV). The Extracellular segment spans residues 140-146 (ASARPDL). A helical transmembrane segment spans residues 147-175 (FPVTFLGQFTCSVAQVFILGMPSRIASVW). Choline contacts are provided by Gln-161 and Leu-165. Residues 176–180 (FGSDE) are Cytoplasmic-facing. Residues 181–206 (VSTACSIGVFGNQLGIAIGFLVPPIL) traverse the membrane as a helical segment. The Extracellular segment spans residues 207–211 (VPNVD). Residues 212–241 (DLDELAAHIRVMFYITAGVATFLFVLVVIV) form a helical membrane-spanning segment. At 242 to 277 (FQERPEIPPTLAQAAARRISPESYSYTASILRLLRN) the chain is on the cytoplasmic side. Residues 278 to 308 (KAFILLVITYGLNVGCFYAVSTLLNRMIIEH) form a helical membrane-spanning segment. Tyr-295 lines the choline pocket. The Extracellular segment spans residues 309-312 (YPGE). The helical transmembrane segment at 313-341 (EVNAGRIGLTIVVAGMVGSLICGIWLDRS) threads the bilayer. Over 342-343 (KT) the chain is Cytoplasmic. The chain crosses the membrane as a helical span at residues 344–366 (YKQTTLAVYLMSLMGLVIYAFTL). Residues 367–369 (DLH) lie on the Extracellular side of the membrane. The chain crosses the membrane as a helical span at residues 370–399 (HLWVVFITAGALGFFMTGYLPLGFEFAVEL). Residues 400–407 (TYPESEGT) lie on the Cytoplasmic side of the membrane. Residues 408 to 433 (SSGLLNCSAQVFGIIFTICQGKIMDS) traverse the membrane as a helical segment. Position 417 (Gln-417) interacts with choline. Topologically, residues 434 to 435 (FG) are extracellular. The chain crosses the membrane as a helical span at residues 436-458 (TLAGNLFLCAFLLIGTIITGCIK). Topologically, residues 459-485 (SDLRRQLANQQAQTADHLDTSPTQTRF) are cytoplasmic.

This sequence belongs to the major facilitator superfamily. Feline leukemia virus subgroup C receptor (TC 2.A.1.28.1) family.

It localises to the cell membrane. It is found in the mitochondrion membrane. The protein localises to the endoplasmic reticulum membrane. The catalysed reaction is choline(out) = choline(in). The enzyme catalyses ethanolamine(in) = ethanolamine(out). It carries out the reaction heme b(in) = heme b(out). Functionally, choline uniporter that specifically mediates choline uptake at the blood-brain-barrier. Responsible for the majority of choline uptake across the blood-brain-barrier from the circulation into the brain. Choline, a nutrient critical for brain development, is a precursor of phosphatidylcholine, as well as betaine. Also mediates transport of ethanolamine. Choline and ethanolamine transport is not coupled with proton transport and is exclusively driven by the choline gradient across the plasma membrane. Also acts as a heme b transporter. This chain is Choline/ethanolamine transporter flvcr2b, found in Danio rerio (Zebrafish).